Here is a 239-residue protein sequence, read N- to C-terminus: UDP-2,3-diacylglucosamine hydrolase (239 aa).

Residues aspartate 8, histidine 10, aspartate 41, asparagine 78, and histidine 113 each contribute to the Mn(2+) site. Asparagine 78 to arginine 79 is a binding site for substrate. Positions 121, 159, 163, 166, and 194 each coordinate substrate. Positions 194 and 196 each coordinate Mn(2+).

Belongs to the LpxH family. Mn(2+) is required as a cofactor.

It localises to the cell inner membrane. It catalyses the reaction UDP-2-N,3-O-bis[(3R)-3-hydroxytetradecanoyl]-alpha-D-glucosamine + H2O = 2-N,3-O-bis[(3R)-3-hydroxytetradecanoyl]-alpha-D-glucosaminyl 1-phosphate + UMP + 2 H(+). It participates in glycolipid biosynthesis; lipid IV(A) biosynthesis; lipid IV(A) from (3R)-3-hydroxytetradecanoyl-[acyl-carrier-protein] and UDP-N-acetyl-alpha-D-glucosamine: step 4/6. Hydrolyzes the pyrophosphate bond of UDP-2,3-diacylglucosamine to yield 2,3-diacylglucosamine 1-phosphate (lipid X) and UMP by catalyzing the attack of water at the alpha-P atom. Involved in the biosynthesis of lipid A, a phosphorylated glycolipid that anchors the lipopolysaccharide to the outer membrane of the cell. This chain is UDP-2,3-diacylglucosamine hydrolase, found in Shewanella oneidensis (strain ATCC 700550 / JCM 31522 / CIP 106686 / LMG 19005 / NCIMB 14063 / MR-1).